We begin with the raw amino-acid sequence, 171 residues long: ATP synthase subunit b (171 aa).

The helical transmembrane segment at lysine 3–threonine 23 threads the bilayer.

The protein belongs to the ATPase B chain family. In terms of assembly, F-type ATPases have 2 components, F(1) - the catalytic core - and F(0) - the membrane proton channel. F(1) has five subunits: alpha(3), beta(3), gamma(1), delta(1), epsilon(1). F(0) has three main subunits: a(1), b(2) and c(10-14). The alpha and beta chains form an alternating ring which encloses part of the gamma chain. F(1) is attached to F(0) by a central stalk formed by the gamma and epsilon chains, while a peripheral stalk is formed by the delta and b chains.

Its subcellular location is the cell inner membrane. Functionally, f(1)F(0) ATP synthase produces ATP from ADP in the presence of a proton or sodium gradient. F-type ATPases consist of two structural domains, F(1) containing the extramembraneous catalytic core and F(0) containing the membrane proton channel, linked together by a central stalk and a peripheral stalk. During catalysis, ATP synthesis in the catalytic domain of F(1) is coupled via a rotary mechanism of the central stalk subunits to proton translocation. Its function is as follows. Component of the F(0) channel, it forms part of the peripheral stalk, linking F(1) to F(0). This chain is ATP synthase subunit b, found in Campylobacter hominis (strain ATCC BAA-381 / DSM 21671 / CCUG 45161 / LMG 19568 / NCTC 13146 / CH001A).